The chain runs to 150 residues: Ribosome maturation factor RimP (150 aa).

Belongs to the RimP family.

The protein resides in the cytoplasm. Its function is as follows. Required for maturation of 30S ribosomal subunits. This is Ribosome maturation factor RimP from Acaryochloris marina (strain MBIC 11017).